The chain runs to 450 residues: Glucose-6-phosphate isomerase (450 aa).

T39 carries the post-translational modification Phosphothreonine. The Proton donor role is filled by E291. Catalysis depends on residues H312 and K426.

Belongs to the GPI family.

The protein resides in the cytoplasm. The enzyme catalyses alpha-D-glucose 6-phosphate = beta-D-fructose 6-phosphate. It functions in the pathway carbohydrate biosynthesis; gluconeogenesis. It participates in carbohydrate degradation; glycolysis; D-glyceraldehyde 3-phosphate and glycerone phosphate from D-glucose: step 2/4. Catalyzes the reversible isomerization of glucose-6-phosphate to fructose-6-phosphate. In Halalkalibacterium halodurans (strain ATCC BAA-125 / DSM 18197 / FERM 7344 / JCM 9153 / C-125) (Bacillus halodurans), this protein is Glucose-6-phosphate isomerase.